The sequence spans 189 residues: UPF0301 protein CTLon_0458 (189 aa).

This sequence belongs to the UPF0301 (AlgH) family.

This is UPF0301 protein CTLon_0458 from Chlamydia trachomatis serovar L2b (strain UCH-1/proctitis).